A 230-amino-acid chain; its full sequence is Demethylmenaquinone methyltransferase (230 aa).

S-adenosyl-L-methionine contacts are provided by residues Thr-62, Asp-80, 100 to 101, and Ser-117; that span reads DA.

Belongs to the class I-like SAM-binding methyltransferase superfamily. MenG/UbiE family.

The catalysed reaction is a 2-demethylmenaquinol + S-adenosyl-L-methionine = a menaquinol + S-adenosyl-L-homocysteine + H(+). Its pathway is quinol/quinone metabolism; menaquinone biosynthesis; menaquinol from 1,4-dihydroxy-2-naphthoate: step 2/2. Methyltransferase required for the conversion of demethylmenaquinol (DMKH2) to menaquinol (MKH2). The sequence is that of Demethylmenaquinone methyltransferase from Mycobacterium sp. (strain KMS).